We begin with the raw amino-acid sequence, 242 residues long: Probable ergothioneine transport ATP-binding protein EgtUA (242 aa).

Positions 2–236 constitute an ABC transporter domain; that stretch reads IEYKNVALRY…PATDFVADLF (235 aa). Residue 34 to 41 coordinates ATP; the sequence is GPSGSGKT.

It belongs to the ABC transporter superfamily. In terms of assembly, the complex is probably composed of at least an ATP-binding protein (EgtUA) and a transmembrane protein (EgtUBC).

Its subcellular location is the cell inner membrane. It catalyses the reaction ergothioneine(out) + ATP + H2O = ergothioneine(in) + ADP + phosphate + H(+). Functionally, part of an ABC transporter complex EgtU required for the uptake of ergothioneine (EGT), a natural low-molecular weight (LMW) thiol antioxidant. Probably responsible for energy coupling to the transport system. The chain is Probable ergothioneine transport ATP-binding protein EgtUA from Streptococcus pneumoniae serotype 2 (strain D39 / NCTC 7466).